A 117-amino-acid polypeptide reads, in one-letter code: Holo-[acyl-carrier-protein] synthase (117 aa).

Residues D8 and E58 each contribute to the Mg(2+) site.

The protein belongs to the P-Pant transferase superfamily. AcpS family. Requires Mg(2+) as cofactor.

It localises to the cytoplasm. The enzyme catalyses apo-[ACP] + CoA = holo-[ACP] + adenosine 3',5'-bisphosphate + H(+). Its function is as follows. Transfers the 4'-phosphopantetheine moiety from coenzyme A to a Ser of acyl-carrier-protein. This chain is Holo-[acyl-carrier-protein] synthase, found in Staphylococcus epidermidis (strain ATCC 35984 / DSM 28319 / BCRC 17069 / CCUG 31568 / BM 3577 / RP62A).